The following is a 122-amino-acid chain: Ribosome-binding factor A (122 aa).

It belongs to the RbfA family. Monomer. Binds 30S ribosomal subunits, but not 50S ribosomal subunits or 70S ribosomes.

It localises to the cytoplasm. Functionally, one of several proteins that assist in the late maturation steps of the functional core of the 30S ribosomal subunit. Associates with free 30S ribosomal subunits (but not with 30S subunits that are part of 70S ribosomes or polysomes). Required for efficient processing of 16S rRNA. May interact with the 5'-terminal helix region of 16S rRNA. In Anaeromyxobacter sp. (strain Fw109-5), this protein is Ribosome-binding factor A.